A 298-amino-acid polypeptide reads, in one-letter code: Ribosomal protein uL3 glutamine methyltransferase (298 aa).

This sequence belongs to the protein N5-glutamine methyltransferase family. PrmB subfamily.

The catalysed reaction is L-glutaminyl-[ribosomal protein uL3] + S-adenosyl-L-methionine = N(5)-methyl-L-glutaminyl-[ribosomal protein uL3] + S-adenosyl-L-homocysteine + H(+). Methylates large ribosomal subunit protein uL3 on a specific glutamine residue. This is Ribosomal protein uL3 glutamine methyltransferase from Bordetella pertussis (strain Tohama I / ATCC BAA-589 / NCTC 13251).